A 406-amino-acid polypeptide reads, in one-letter code: Probable 26S proteasome regulatory subunit 10B (406 aa).

191 to 198 (GPPGTGKT) is a binding site for ATP.

The protein belongs to the AAA ATPase family.

The protein resides in the cytoplasm. The protein localises to the nucleus. In terms of biological role, the 26S proteasome is involved in the ATP-dependent degradation of ubiquitinated proteins. The regulatory (or ATPase) complex confers ATP dependency and substrate specificity to the 26S complex. This is Probable 26S proteasome regulatory subunit 10B (rpt-4) from Caenorhabditis elegans.